The primary structure comprises 473 residues: Cysteine--tRNA ligase (473 aa).

Zn(2+) is bound at residue Cys29. A 'HIGH' region motif is present at residues 31–41 (PTVYDRAHLGN). Cys225, His250, and Glu254 together coordinate Zn(2+). The 'KMSKS' region signature appears at 281–285 (KMSKS). Lys284 contributes to the ATP binding site.

The protein belongs to the class-I aminoacyl-tRNA synthetase family. Monomer. Requires Zn(2+) as cofactor.

It is found in the cytoplasm. The enzyme catalyses tRNA(Cys) + L-cysteine + ATP = L-cysteinyl-tRNA(Cys) + AMP + diphosphate. This chain is Cysteine--tRNA ligase, found in Roseobacter denitrificans (strain ATCC 33942 / OCh 114) (Erythrobacter sp. (strain OCh 114)).